We begin with the raw amino-acid sequence, 371 residues long: Pyruvate dehydrogenase E1 component subunit alpha (371 aa).

In terms of assembly, heterodimer of an alpha and a beta chain. The cofactor is thiamine diphosphate.

The catalysed reaction is N(6)-[(R)-lipoyl]-L-lysyl-[protein] + pyruvate + H(+) = N(6)-[(R)-S(8)-acetyldihydrolipoyl]-L-lysyl-[protein] + CO2. With respect to regulation, activity of the E1 module is inhibited by the pyruvate dehydrogenase inhibitor PdhI. Functionally, the pyruvate dehydrogenase complex catalyzes the overall conversion of pyruvate to acetyl-CoA and CO(2). It contains multiple copies of three enzymatic components: pyruvate dehydrogenase (E1), dihydrolipoamide acetyltransferase (E2) and lipoamide dehydrogenase (E3). The B.subtilis PDH complex also possesses branched-chain 2-oxoacid dehydrogenase (BCDH) activity. This Bacillus subtilis (strain 168) protein is Pyruvate dehydrogenase E1 component subunit alpha.